Here is a 379-residue protein sequence, read N- to C-terminus: Protein RecA (379 aa).

Residue 79–86 participates in ATP binding; sequence GPESSGKT.

The protein belongs to the RecA family.

Its subcellular location is the cytoplasm. In terms of biological role, can catalyze the hydrolysis of ATP in the presence of single-stranded DNA, the ATP-dependent uptake of single-stranded DNA by duplex DNA, and the ATP-dependent hybridization of homologous single-stranded DNAs. It interacts with LexA causing its activation and leading to its autocatalytic cleavage. In Streptococcus thermophilus, this protein is Protein RecA.